A 330-amino-acid chain; its full sequence is Aspartate--ammonia ligase (330 aa).

The protein belongs to the class-II aminoacyl-tRNA synthetase family. AsnA subfamily.

It localises to the cytoplasm. It catalyses the reaction L-aspartate + NH4(+) + ATP = L-asparagine + AMP + diphosphate + H(+). It participates in amino-acid biosynthesis; L-asparagine biosynthesis; L-asparagine from L-aspartate (ammonia route): step 1/1. This Edwardsiella ictaluri (strain 93-146) protein is Aspartate--ammonia ligase.